The following is a 414-amino-acid chain: Succinylornithine transaminase (414 aa).

N6-(pyridoxal phosphate)lysine is present on Lys260.

Belongs to the class-III pyridoxal-phosphate-dependent aminotransferase family. AstC subfamily. Pyridoxal 5'-phosphate serves as cofactor.

The enzyme catalyses N(2)-succinyl-L-ornithine + 2-oxoglutarate = N-succinyl-L-glutamate 5-semialdehyde + L-glutamate. It participates in amino-acid degradation; L-arginine degradation via AST pathway; L-glutamate and succinate from L-arginine: step 3/5. Its function is as follows. Catalyzes the transamination of N(2)-succinylornithine and alpha-ketoglutarate into N(2)-succinylglutamate semialdehyde and glutamate. Can also act as an acetylornithine aminotransferase. The chain is Succinylornithine transaminase from Yersinia pseudotuberculosis serotype I (strain IP32953).